Here is a 349-residue protein sequence, read N- to C-terminus: Rhodopsin (349 aa).

Residues 1-33 (TEGPYFYIPMSNATGVVRSPYEYPQYYLVYPAA) lie on the Extracellular side of the membrane. Asn12 carries an N-linked (GlcNAc...) asparagine glycan. Residues 34–58 (FAVLGAYMFFLIIFGFPVNFLTLYV) traverse the membrane as a helical segment. Residues 59–70 (TIEHKKLRTPLN) lie on the Cytoplasmic side of the membrane. The chain crosses the membrane as a helical span at residues 71–93 (YILLNLAVADLFMVIGGFTTTIY). The Extracellular portion of the chain corresponds to 94–107 (TSMHGYFVLGRLGC). A disulfide bridge links Cys107 with Cys184. A helical transmembrane segment spans residues 108-130 (NLEGFSATLGGMISLWSLVVLAV). Residues 131 to 133 (ERW) carry the 'Ionic lock' involved in activated form stabilization motif. At 131 to 149 (ERWVVVCKPMSNFRFGENH) the chain is on the cytoplasmic side. The chain crosses the membrane as a helical span at residues 150-170 (AIMGVTLTWAMGLACTVPPLV). Over 171 to 199 (GWSRYIPEGMQCSCGIDYYTRAEGFNNES) the chain is Extracellular. N-linked (GlcNAc...) asparagine glycosylation occurs at Asn197. The helical transmembrane segment at 200–221 (FVLYMFVCHFSFPLVVIFFCYG) threads the bilayer. Topologically, residues 222–249 (RLLCAVKEAAAAQQESETTQRAEREVTR) are cytoplasmic. A helical membrane pass occupies residues 250 to 271 (MVILMVIGFLVCWLPYASVAWY). Residues 272 to 283 (IFTHQGSEFGPL) are Extracellular-facing. A helical membrane pass occupies residues 284 to 305 (FMTIPAFFAKSSAIYNPVIYIC). Lys293 is modified (N6-(retinylidene)lysine). Over 306 to 349 (LNKQFRQCMLTTLFCGKNPFEEEEGASSTKTEASSASSSSVSPA) the chain is Cytoplasmic. Cys320 carries the S-palmitoyl cysteine lipid modification. The tract at residues 326 to 349 (EEEEGASSTKTEASSASSSSVSPA) is disordered. The span at 331-349 (ASSTKTEASSASSSSVSPA) shows a compositional bias: low complexity.

This sequence belongs to the G-protein coupled receptor 1 family. Opsin subfamily. Phosphorylated on some or all of the serine and threonine residues present in the C-terminal region. In terms of processing, contains one covalently linked retinal chromophore.

It is found in the membrane. The protein resides in the cell projection. It localises to the cilium. Its subcellular location is the photoreceptor outer segment. Its function is as follows. Photoreceptor required for image-forming vision at low light intensity. While most salt water fish species use retinal as chromophore, most freshwater fish use 3-dehydroretinal, or a mixture of retinal and 3-dehydroretinal. Light-induced isomerization of 11-cis to all-trans retinal triggers a conformational change that activates signaling via G-proteins. Subsequent receptor phosphorylation mediates displacement of the bound G-protein alpha subunit by arrestin and terminates signaling. The polypeptide is Rhodopsin (rho) (Myripristis berndti (Bigscale soldierfish)).